Here is a 206-residue protein sequence, read N- to C-terminus: Methyl-coenzyme M reductase operon protein C (206 aa).

MCR is composed of three subunits: alpha, beta, and gamma. The function of proteins C and D is not known.

This chain is Methyl-coenzyme M reductase operon protein C (mcrC), found in Methanosarcina barkeri (strain Fusaro / DSM 804).